Reading from the N-terminus, the 359-residue chain is Phospho-N-acetylmuramoyl-pentapeptide-transferase (359 aa).

Transmembrane regions (helical) follow at residues 26 to 46 (TIYGGLTAFLICFLLGPWVIN), 73 to 93 (TMGGILILFSLGVSTLLWADL), 98 to 118 (ILITLLSMLLFGAIGFIDDYL), 134 to 154 (FLVQIMAGLVISYLVYLCPDF), 166 to 186 (FTPDLGIWYIPFATLVIVGTS), 197 to 217 (GLAIGPIIIAGVTYMIFAYVA), 234 to 254 (CGEITIVCGILAGAGLGFLWF), 261 to 281 (VFMGDTGSIPLGAILGTIAVI), 286 to 306 (ILLLVVGGLFVIEALSVIIQV), and 338 to 358 (IVRFWIIAITLALISLSTLKI).

It belongs to the glycosyltransferase 4 family. MraY subfamily. It depends on Mg(2+) as a cofactor.

It is found in the cell inner membrane. It catalyses the reaction UDP-N-acetyl-alpha-D-muramoyl-L-alanyl-gamma-D-glutamyl-meso-2,6-diaminopimeloyl-D-alanyl-D-alanine + di-trans,octa-cis-undecaprenyl phosphate = di-trans,octa-cis-undecaprenyl diphospho-N-acetyl-alpha-D-muramoyl-L-alanyl-D-glutamyl-meso-2,6-diaminopimeloyl-D-alanyl-D-alanine + UMP. Its pathway is cell wall biogenesis; peptidoglycan biosynthesis. Functionally, catalyzes the initial step of the lipid cycle reactions in the biosynthesis of the cell wall peptidoglycan: transfers peptidoglycan precursor phospho-MurNAc-pentapeptide from UDP-MurNAc-pentapeptide onto the lipid carrier undecaprenyl phosphate, yielding undecaprenyl-pyrophosphoryl-MurNAc-pentapeptide, known as lipid I. This is Phospho-N-acetylmuramoyl-pentapeptide-transferase from Desulforapulum autotrophicum (strain ATCC 43914 / DSM 3382 / VKM B-1955 / HRM2) (Desulfobacterium autotrophicum).